The sequence spans 358 residues: Peptide chain release factor 1 (358 aa).

Gln-236 carries the post-translational modification N5-methylglutamine.

Belongs to the prokaryotic/mitochondrial release factor family. Post-translationally, methylated by PrmC. Methylation increases the termination efficiency of RF1.

The protein resides in the cytoplasm. Peptide chain release factor 1 directs the termination of translation in response to the peptide chain termination codons UAG and UAA. The protein is Peptide chain release factor 1 of Corynebacterium efficiens (strain DSM 44549 / YS-314 / AJ 12310 / JCM 11189 / NBRC 100395).